Reading from the N-terminus, the 241-residue chain is LexA repressor (241 aa).

The segment at residues 26–46 (FDEMKTALDLRSKSGIHRLIT) is a DNA-binding region (H-T-H motif). Catalysis depends on for autocatalytic cleavage activity residues S162 and K200.

It belongs to the peptidase S24 family. As to quaternary structure, homodimer.

The enzyme catalyses Hydrolysis of Ala-|-Gly bond in repressor LexA.. Represses a number of genes involved in the response to DNA damage (SOS response), including recA and lexA. In the presence of single-stranded DNA, RecA interacts with LexA causing an autocatalytic cleavage which disrupts the DNA-binding part of LexA, leading to derepression of the SOS regulon and eventually DNA repair. This is LexA repressor from Ruegeria sp. (strain TM1040) (Silicibacter sp.).